Consider the following 160-residue polypeptide: Dysbindin domain-containing protein 1 (160 aa).

A phosphoserine mark is found at serine 3, serine 97, and serine 121. Residues 95-160 form a disordered region; it reads ADSDDENLAT…FLTVEEPKED (66 aa). Residues 127–143 show a composition bias toward basic and acidic residues; the sequence is TRAEQNREKQPPSDPER.

The protein belongs to the dysbindin family.

In Mus musculus (Mouse), this protein is Dysbindin domain-containing protein 1 (Dbndd1).